Consider the following 298-residue polypeptide: Pantothenate synthetase (298 aa).

ATP is bound at residue 30-37; the sequence is MGNLHEGH. Residue His-37 is the Proton donor of the active site. (R)-pantoate is bound at residue Gln-61. Gln-61 is a beta-alanine binding site. Position 149–152 (149–152) interacts with ATP; sequence GEKD. Gln-155 contributes to the (R)-pantoate binding site. Residues Val-178 and 186–189 each bind ATP; that span reads MSSR.

Belongs to the pantothenate synthetase family. In terms of assembly, homodimer.

It localises to the cytoplasm. The enzyme catalyses (R)-pantoate + beta-alanine + ATP = (R)-pantothenate + AMP + diphosphate + H(+). It participates in cofactor biosynthesis; (R)-pantothenate biosynthesis; (R)-pantothenate from (R)-pantoate and beta-alanine: step 1/1. Catalyzes the condensation of pantoate with beta-alanine in an ATP-dependent reaction via a pantoyl-adenylate intermediate. The chain is Pantothenate synthetase from Aliivibrio salmonicida (strain LFI1238) (Vibrio salmonicida (strain LFI1238)).